We begin with the raw amino-acid sequence, 290 residues long: 4-diphosphocytidyl-2-C-methyl-D-erythritol kinase (290 aa).

The active site involves Lys-14. 103-113 (PMGGGLGGGSS) provides a ligand contact to ATP. Asp-145 is an active-site residue.

The protein belongs to the GHMP kinase family. IspE subfamily. As to quaternary structure, homodimer.

It carries out the reaction 4-CDP-2-C-methyl-D-erythritol + ATP = 4-CDP-2-C-methyl-D-erythritol 2-phosphate + ADP + H(+). It participates in isoprenoid biosynthesis; isopentenyl diphosphate biosynthesis via DXP pathway; isopentenyl diphosphate from 1-deoxy-D-xylulose 5-phosphate: step 3/6. In terms of biological role, catalyzes the phosphorylation of the position 2 hydroxy group of 4-diphosphocytidyl-2C-methyl-D-erythritol. The sequence is that of 4-diphosphocytidyl-2-C-methyl-D-erythritol kinase from Pectobacterium carotovorum subsp. carotovorum (strain PC1).